A 155-amino-acid chain; its full sequence is FHA domain-containing protein FhaB (155 aa).

The helical transmembrane segment at 6 to 28 (LQLTRVGFLLLLWLFIWSVLRIL) threads the bilayer. The residue at position 36 (Thr36) is a Phosphothreonine. In terms of domain architecture, FHA spans 83-132 (VLIGRADDSTLVLTDDYASTRHARLSPRGSEWYVEDLGSTNGTYLDRAKV).

Phosphorylated by PknB. Dephosphorylated by PstP.

The protein resides in the cell membrane. In Mycolicibacterium smegmatis (strain ATCC 700084 / mc(2)155) (Mycobacterium smegmatis), this protein is FHA domain-containing protein FhaB (fhaB).